We begin with the raw amino-acid sequence, 1090 residues long: Leucine-rich repeat receptor-like serine/threonine-protein kinase RGI4 (1090 aa).

The first 20 residues, 1-20, serve as a signal peptide directing secretion; the sequence is MPRNPRFCFFLFLLFHSSLF. The Extracellular portion of the chain corresponds to 21-702; it reads FSIPCFSIDE…IQTRHRSAVK (682 aa). The stretch at 36-59 is one LRR 1 repeat; that stretch reads LSWKSQLNISGDALSSWKASESNP. A glycan (N-linked (GlcNAc...) asparagine) is linked at Asn-43. The cysteines at positions 60 and 67 are disulfide-linked. LRR repeat units lie at residues 95–119, 120–143, 145–166, and 168–191; these read IKSLTLLSLTSVNLTGSIPKELGDL, SELEVLDLADNSLSGEIPVDIFKL, KLKILSLNTNNLEGVIPSELGN, and VNLIELTLFDNKLAGEIPRTIGEL. N-linked (GlcNAc...) asparagine glycosylation is present at Asn-107. Short sequence motifs (small peptide recognition) lie at residues 176–177, 198–201, 221–226, and Tyr-249; these read FD, RAGG, and TLGLAE. LRR repeat units follow at residues 216-240, 242-264, 265-288, 289-312, 314-335, 336-360, and 362-386; these read CESLVTLGLAETSLSGRLPASIGNL, KVQTIALYTSLLSGPIPDEIGNC, TELQNLYLYQNSISGSIPVSMGRL, KKLQSLLLWQNNLVGKIPTELGTC, ELFLVDLSENLLTGNIPRSFGN, LPNLQELQLSVNQLSGTIPEELANC, and KLTHLEIDNNQISGEIPPLIGKLTS. N-linked (GlcNAc...) asparagine glycosylation is present at Asn-263. Positions 269 to 273 match the CLE45 peptide binding motif; the sequence is NLYLY. A Small peptide recognition motif is present at residues 271-273; it reads YLY. 2 short sequence motifs (small peptide recognition) span residues 319–322 and 341–343; these read DLSE and ELQ. Asn-359 carries N-linked (GlcNAc...) asparagine glycosylation. 2 consecutive short sequence motifs (small peptide recognition) follow at residues 389–393 and 415–418; these read MFFAW and DLSY. LRR repeat units follow at residues 408–432, 434–456, 457–480, 481–504, 506–526, 527–550, 551–574, 576–598, 600–622, 623–646, and 647–670; these read CQELQAIDLSYNNLSGSIPNGIFEI, NLTKLLLLSNYLSGFIPPDIGNC, TNLYRLRLNGNRLAGNIPAEIGNL, KNLNFIDISENRLIGNIPPEISGC, SLEFVDLHSNGLTGGLPGTLP, KSLQFIDLSDNSLTGSLPTGIGSL, TELTKLNLAKNRFSGEIPREISSC, SLQLLNLGDNGFTGEIPNELGRI, SLAISLNLSCNHFTGEIPSRFSS, LTNLGTLDVSHNKLAGNLNVLADL, and QNLVSLNISFNEFSGELPNTLFFR. N-linked (GlcNAc...) asparagine glycosylation is found at Asn-420 and Asn-434. Positions 437 to 441 match the Small peptide recognition motif; it reads KLLLL. The N-linked (GlcNAc...) asparagine glycan is linked to Asn-455. Positions 461 to 463 match the Small peptide recognition motif; it reads RLR. The N-linked (GlcNAc...) asparagine glycan is linked to Asn-606. Residue Asn-653 is glycosylated (N-linked (GlcNAc...) asparagine). Residues 703-723 form a helical membrane-spanning segment; that stretch reads VTMSILVAASVVLVLMAVYTL. The Cytoplasmic segment spans residues 724–1090; sequence VKAQRITGKQ…CSFAYSDESV (367 aa). The Protein kinase domain maps to 758–1040; that stretch reads LTSANVIGTG…KDIVAMLKEI (283 aa). Residues 764–772 and Lys-786 each bind ATP; that span reads IGTGSSGVV. Residues Tyr-829 and Tyr-869 each carry the phosphotyrosine modification. The Proton acceptor role is filled by Asp-882. A Phosphotyrosine modification is found at Tyr-932. The stretch at 1037–1060 is one LRR 24 repeat; that stretch reads LKEIRQFDMDRSESDMIKGGKCEK. Residues 1054 to 1079 form a disordered region; that stretch reads KGGKCEKWQPQPLPPEKIVSTPRGSS.

This sequence belongs to the protein kinase superfamily. Ser/Thr protein kinase family. In terms of assembly, self-interacts. Interacts with RGF1; this interaction triggers its phosphorylation and ubiquitination and the formation of heterodimers with SERK1. In terms of processing, autophosphorylated. Post-translationally, phosphorylated and ubiquitinated upon interaction with RGF1, thus leading to activation a subsequent degradation. As to expression, expressed in floers, pollen grains and stipules. Present in roots.

It is found in the cell membrane. The enzyme catalyses L-seryl-[protein] + ATP = O-phospho-L-seryl-[protein] + ADP + H(+). It catalyses the reaction L-threonyl-[protein] + ATP = O-phospho-L-threonyl-[protein] + ADP + H(+). Its function is as follows. Receptor with a serine/threonine-protein kinase activity. Together with SKM1, LRR-rich receptor-like kinase (LRR-RLK) required for male fertility by the perception of CLE43 and CLE45 peptides and the transduction of their promoting action in pollen tubes, especially under relatively high temperature (at 30 degrees Celsius), thus conferring tolerance against high temperature probably through the maintenance of mitochondrial activity. Seems to not be involved in the perception of CLE45 peptide in roots. Together with RGI1, RGI2, RGI3, RGI4 and RGI5, acts as receptor of RGF1, a peptide hormone that maintains the postembryonic root stem cell niche by regulating the expression levels and patterns of the transcription factor PLETHORA (PLT). Links RGF1 signal with its downstream components. The protein is Leucine-rich repeat receptor-like serine/threonine-protein kinase RGI4 of Arabidopsis thaliana (Mouse-ear cress).